The chain runs to 819 residues: Probable cadmium/zinc-transporting ATPase HMA1, chloroplastic (819 aa).

The transit peptide at 1–17 directs the protein to the chloroplast; sequence MEPATLTRSSSLTRFPY. Over 18 to 122 the chain is Stromal; sequence RRGLSTLRLA…IGWVRLANYL (105 aa). The segment covering 66–79 has biased composition (basic and acidic residues); sequence DHHHDHHHDDEQDH. The disordered stretch occupies residues 66–87; it reads DHHHDHHHDDEQDHHNHHHHHH. The chain crosses the membrane as a helical span at residues 123–144; that stretch reads REHLHLCCSAAAMFLAAAVCPY. The Lumenal portion of the chain corresponds to 145–153; it reads LAPEPYIKS. The helical transmembrane segment at 154–173 threads the bilayer; it reads LQNAFMIVGFPLVGVSASLD. Residues 174–180 lie on the Stromal side of the membrane; the sequence is ALMDIAG. The chain crosses the membrane as a helical span at residues 181 to 201; sequence GKVNIHVLMALAAFASVFMGN. Position 202 (Ala202) is a topological domain, lumenal. The helical transmembrane segment at 203–223 threads the bilayer; the sequence is LEGGLLLAMFNLAHIAEEFFT. Over 224-361 the chain is Stromal; it reads SRSMVDVKEL…KPKLQRWLDE (138 aa). The helical transmembrane segment at 362–384 threads the bilayer; that stretch reads FGENYSKVVVVLSLAIAFLGPFL. Residues 385–398 lie on the Lumenal side of the membrane; it reads FKWPFLSTAACRGS. A helical membrane pass occupies residues 399–416; that stretch reads VYRALGLMVAASPCALAV. Topologically, residues 417–737 are stromal; the sequence is APLAYATAIS…AKSRQTTSLV (321 aa). Asp453 serves as the catalytic 4-aspartylphosphate intermediate. Residues Glu682 and Asp686 each contribute to the Mg(2+) site. A helical membrane pass occupies residues 738 to 757; it reads KQNVALALTSIFLAALPSVL. Residues 758–762 are Lumenal-facing; it reads GFVPL. A helical transmembrane segment spans residues 763–781; that stretch reads WLTVLLHEGGTLLVCLNSV. Topologically, residues 782 to 819 are stromal; it reads RGLNDPSWSWKQDIVHLINKLRSQEPTSSSSNSLSSAH.

This sequence belongs to the cation transport ATPase (P-type) (TC 3.A.3) family. Type IB subfamily.

It localises to the plastid. It is found in the chloroplast inner membrane. It carries out the reaction Zn(2+)(in) + ATP + H2O = Zn(2+)(out) + ADP + phosphate + H(+). The enzyme catalyses Cd(2+)(in) + ATP + H2O = Cd(2+)(out) + ADP + phosphate + H(+). Functionally, involved in cadmium/zinc transport. This chain is Probable cadmium/zinc-transporting ATPase HMA1, chloroplastic (HMA1), found in Arabidopsis thaliana (Mouse-ear cress).